We begin with the raw amino-acid sequence, 230 residues long: 2,3-bisphosphoglycerate-dependent phosphoglycerate mutase (230 aa).

Substrate contacts are provided by residues 10–17 (RHGQSKWN), 23–24 (TG), Arg62, 89–92 (ERHY), Lys100, 116–117 (RR), and 185–186 (GN). His11 functions as the Tele-phosphohistidine intermediate in the catalytic mechanism. Glu89 acts as the Proton donor/acceptor in catalysis.

Belongs to the phosphoglycerate mutase family. BPG-dependent PGAM subfamily. Homodimer.

It carries out the reaction (2R)-2-phosphoglycerate = (2R)-3-phosphoglycerate. It participates in carbohydrate degradation; glycolysis; pyruvate from D-glyceraldehyde 3-phosphate: step 3/5. Functionally, catalyzes the interconversion of 2-phosphoglycerate and 3-phosphoglycerate. This is 2,3-bisphosphoglycerate-dependent phosphoglycerate mutase from Buchnera aphidicola subsp. Schizaphis graminum (strain Sg).